We begin with the raw amino-acid sequence, 138 residues long: Putative pre-16S rRNA nuclease (138 aa).

Belongs to the YqgF nuclease family.

The protein resides in the cytoplasm. Could be a nuclease involved in processing of the 5'-end of pre-16S rRNA. This chain is Putative pre-16S rRNA nuclease (yrrK), found in Bacillus subtilis (strain 168).